Reading from the N-terminus, the 338-residue chain is Methionine aminopeptidase 1D, mitochondrial (338 aa).

The transit peptide at 1–47 (MAAPCAAQCLYRTGGLRLLQRISRLPHCHKDASLAHQCQFHRSFFWR) directs the protein to the mitochondrion. H164 contacts substrate. A divalent metal cation contacts are provided by D181, D192, and H255. H262 is a binding site for substrate. 2 residues coordinate a divalent metal cation: E287 and E318.

The protein belongs to the peptidase M24A family. Methionine aminopeptidase type 1 subfamily. Co(2+) is required as a cofactor. It depends on Zn(2+) as a cofactor. Mn(2+) serves as cofactor. The cofactor is Fe(2+).

It localises to the mitochondrion. It carries out the reaction Release of N-terminal amino acids, preferentially methionine, from peptides and arylamides.. Functionally, removes the N-terminal methionine from nascent proteins. The N-terminal methionine is often cleaved when the second residue in the primary sequence is small and uncharged (Met-Ala-, Cys, Gly, Pro, Ser, Thr, or Val). Requires deformylation of the N(alpha)-formylated initiator methionine before it can be hydrolyzed. The polypeptide is Methionine aminopeptidase 1D, mitochondrial (metap1d) (Danio rerio (Zebrafish)).